A 692-amino-acid chain; its full sequence is DNA ligase (692 aa).

NAD(+) is bound by residues 40 to 44, 89 to 90, and Glu121; these read DAAYD and SL. Catalysis depends on Lys123, which acts as the N6-AMP-lysine intermediate. Positions 144, 181, 297, and 321 each coordinate NAD(+). Residues Cys415, Cys417, Cys439, and Cys445 each contribute to the Zn(2+) site. One can recognise a BRCT domain in the interval 614–692; sequence KTDTAVAGKT…EDEWLEMVGS (79 aa).

The protein belongs to the NAD-dependent DNA ligase family. LigA subfamily. Mg(2+) is required as a cofactor. It depends on Mn(2+) as a cofactor.

The catalysed reaction is NAD(+) + (deoxyribonucleotide)n-3'-hydroxyl + 5'-phospho-(deoxyribonucleotide)m = (deoxyribonucleotide)n+m + AMP + beta-nicotinamide D-nucleotide.. Its function is as follows. DNA ligase that catalyzes the formation of phosphodiester linkages between 5'-phosphoryl and 3'-hydroxyl groups in double-stranded DNA using NAD as a coenzyme and as the energy source for the reaction. It is essential for DNA replication and repair of damaged DNA. In Phenylobacterium zucineum (strain HLK1), this protein is DNA ligase.